A 286-amino-acid chain; its full sequence is MQFIKYKSYILKFLLVSCIFCINGCDCTILCPNGLIAQEQRFVLFVSFFTMLLIIIPVIFMTIFFVLRYRESNFSKTYDPKWSHSNIIELLIWGIPIIIIVFLSIFSWKSVHDLDPKKPIVSNVQPIKINVISLDWKWLFIYPDQKIATINKLIIPINTPIIFNLTSGSVMNSFFIPSLGSQIYVMPGMKTNLNLIANKLGQFKGFSSNYSGKGFSNMKFDVLVTSDHIFFYEWVKKIQKSKYKLNSMYQFNQLAIPSDNNAIKYFSNLKENLFNVVIANVLKISL.

An N-terminal signal peptide occupies residues 1–24; sequence MQFIKYKSYILKFLLVSCIFCING. Cysteine 25 carries the N-palmitoyl cysteine lipid modification. Residue cysteine 25 is the site of S-diacylglycerol cysteine attachment. Over 25 to 44 the chain is Extracellular; it reads CDCTILCPNGLIAQEQRFVL. A helical transmembrane segment spans residues 45–67; sequence FVSFFTMLLIIIPVIFMTIFFVL. The Cytoplasmic segment spans residues 68–85; that stretch reads RYRESNFSKTYDPKWSHS. Residues 86–108 traverse the membrane as a helical segment; it reads NIIELLIWGIPIIIIVFLSIFSW. Residues 109–286 are Extracellular-facing; sequence KSVHDLDPKK…VIANVLKISL (178 aa).

Belongs to the cytochrome c oxidase subunit 2 family. Heterooctamer of two A chains, two B chains, two C chains and two D chains.

The protein resides in the cell membrane. In terms of biological role, cytochrome bo(3) ubiquinol terminal oxidase is the component of the aerobic respiratory chain of E.coli that predominates when cells are grown at high aeration. Has proton pump activity across the membrane in addition to electron transfer, pumping 2 protons/electron. The protein is Cytochrome bo(3) ubiquinol oxidase subunit 2 (cyoA) of Buchnera aphidicola subsp. Baizongia pistaciae (strain Bp).